The sequence spans 738 residues: Flowering time control protein FCA (738 aa).

A disordered region spans residues 1 to 118 (MHRGGDRSTD…RGDHSDHDNR (118 aa)). Composition is skewed to gly residues over residues 52-70 (RGGG…GGGR) and 81-98 (SGGG…GEPG). Residues 109-118 (RGDHSDHDNR) show a composition bias toward basic and acidic residues. RRM domains follow at residues 122–203 (VKLF…YADG) and 213–293 (HKLF…FADP). Disordered regions lie at residues 292–414 (DPKR…GHHL) and 566–594 (QQSN…AIIP). Residues 301–311 (SRGGPAFGGPG) show a composition bias toward gly residues. A compositionally biased stretch (polar residues) spans 342–358 (HPSSPRSAPHQFNNFGS). Residues 368-377 (TVTSTTDTAT) are compositionally biased toward low complexity. Composition is skewed to polar residues over residues 383–401 (FSGN…SSHM) and 575–594 (PTQG…AIIP). Residues 609-642 (VPLTCNWTEHTSPEGFKYYYNSITRESKWDKPEE) enclose the WW domain. A disordered region spans residues 670–738 (MQQLQSPPQA…QSAQERAWKS (69 aa)). Residues 683–706 (PAMQPVQQIPQAQQGQQQMQMKQQ) show a composition bias toward low complexity. Residues 723 to 732 (RIQQGIQSAQ) are compositionally biased toward polar residues.

In terms of assembly, interacts with FY. Binds to SF1, FIK, RPRD1B, Os09g0509000/LOC_Os09g33480 and MADS8. Mostly expressed in young flowers (panicles) and stems, and also present in young seedlings leaves and roots.

Its subcellular location is the nucleus. Functionally, plays a major role in the promotion of the transition of the vegetative meristem to reproductive development. Required for RNA-mediated chromatin silencing of a range of loci in the genome. Cotranscriptionally recognizes aberrant RNA and marks it for silencing. Controls alternative cleavage and polyadenylation on pre-mRNAs and antisense RNAs. Regulates flowering time, seed size and cell volume, probably via the modulation of cell size. The chain is Flowering time control protein FCA from Oryza sativa subsp. japonica (Rice).